Here is a 396-residue protein sequence, read N- to C-terminus: Tryptophan synthase beta chain (396 aa).

Lysine 86 carries the post-translational modification N6-(pyridoxal phosphate)lysine.

It belongs to the TrpB family. In terms of assembly, tetramer of two alpha and two beta chains. Requires pyridoxal 5'-phosphate as cofactor.

It catalyses the reaction (1S,2R)-1-C-(indol-3-yl)glycerol 3-phosphate + L-serine = D-glyceraldehyde 3-phosphate + L-tryptophan + H2O. It functions in the pathway amino-acid biosynthesis; L-tryptophan biosynthesis; L-tryptophan from chorismate: step 5/5. Functionally, the beta subunit is responsible for the synthesis of L-tryptophan from indole and L-serine. The protein is Tryptophan synthase beta chain of Francisella tularensis subsp. novicida (strain U112).